Consider the following 404-residue polypeptide: L-cysteine:1D-myo-inositol 2-amino-2-deoxy-alpha-D-glucopyranoside ligase (404 aa).

Residues 1–20 (MRTWPTPDVPPLPRTGAPAP) form a disordered region. Residue Cys-45 coordinates Zn(2+). Residues 45 to 48 (CGIT), Thr-60, and 83 to 85 (NVT) contribute to the L-cysteinyl-5'-AMP site. The short motif at 47 to 57 (ITPYDATHLGH) is the 'HIGH' region element. The 'ERGGDP' region signature appears at 185 to 190 (ERGGDP). Positions 185–216 (ERGGDPDRPGKKHPLDPALWRGEQPGEPSWDG) are disordered. Residues 186–199 (RGGDPDRPGKKHPL) show a composition bias toward basic and acidic residues. Trp-226 lines the L-cysteinyl-5'-AMP pocket. Cys-230 provides a ligand contact to Zn(2+). Residue 248-250 (GAD) participates in L-cysteinyl-5'-AMP binding. His-255 is a Zn(2+) binding site. Leu-280 lines the L-cysteinyl-5'-AMP pocket. The 'KMSKS' region motif lies at 286–290 (KMSKS).

This sequence belongs to the class-I aminoacyl-tRNA synthetase family. MshC subfamily. In terms of assembly, monomer. Zn(2+) serves as cofactor.

It catalyses the reaction 1D-myo-inositol 2-amino-2-deoxy-alpha-D-glucopyranoside + L-cysteine + ATP = 1D-myo-inositol 2-(L-cysteinylamino)-2-deoxy-alpha-D-glucopyranoside + AMP + diphosphate + H(+). Catalyzes the ATP-dependent condensation of GlcN-Ins and L-cysteine to form L-Cys-GlcN-Ins. The chain is L-cysteine:1D-myo-inositol 2-amino-2-deoxy-alpha-D-glucopyranoside ligase from Xylanimonas cellulosilytica (strain DSM 15894 / JCM 12276 / CECT 5975 / KCTC 9989 / LMG 20990 / NBRC 107835 / XIL07).